A 224-amino-acid polypeptide reads, in one-letter code: MPNLDLYNFPMAPASRAIQMVAKALGLELNSKLINTMEGDQLKPEFVRINPQHTIPTLVDNGFVIWESRAIAVYLVEKYGKPDSPLYPNDPQKRALINQRLYFDMGTLYDALTKYFFLIFRTGKFGDQEALDKVNSAFGFLNTFLEGQDFVAGSQLTVADIVILATVSTVEWFSFDLSKFPNVERWLKNAPKVTPGWEQNLESLQQGKKFLQDLQAAKEKEVKA.

A GST N-terminal domain is found at 2–83 (PNLDLYNFPM…YLVEKYGKPD (82 aa)). Glutathione-binding positions include 53–55 (HTI) and 67–69 (ESR). The region spanning 90-210 (DPQKRALINQ…LESLQQGKKF (121 aa)) is the GST C-terminal domain.

This sequence belongs to the GST superfamily. Delta family. Homodimer.

It carries out the reaction RX + glutathione = an S-substituted glutathione + a halide anion + H(+). Conjugation of reduced glutathione to a wide number of exogenous and endogenous hydrophobic electrophiles. May be involved in detoxification. The chain is Glutathione S-transferase D7 from Drosophila melanogaster (Fruit fly).